Reading from the N-terminus, the 433-residue chain is ATP-dependent protease ATPase subunit HslU (433 aa).

Residues Ile-18, 60-65 (GVGKTE), Asp-246, Glu-311, and Arg-383 each bind ATP.

This sequence belongs to the ClpX chaperone family. HslU subfamily. A double ring-shaped homohexamer of HslV is capped on each side by a ring-shaped HslU homohexamer. The assembly of the HslU/HslV complex is dependent on binding of ATP.

Its subcellular location is the cytoplasm. Its function is as follows. ATPase subunit of a proteasome-like degradation complex; this subunit has chaperone activity. The binding of ATP and its subsequent hydrolysis by HslU are essential for unfolding of protein substrates subsequently hydrolyzed by HslV. HslU recognizes the N-terminal part of its protein substrates and unfolds these before they are guided to HslV for hydrolysis. The sequence is that of ATP-dependent protease ATPase subunit HslU from Cereibacter sphaeroides (strain ATCC 17029 / ATH 2.4.9) (Rhodobacter sphaeroides).